The chain runs to 295 residues: MIVSMLAATDLARILDGRRIADDLLDALKTRVDARVAAGKLPPTLAVVLVGSDPASVVYVRNKRRAAEKVGIKAYDFDLPEATTEAELAALIDRLNADPKIHGILIQLPLPGIPDAHRLIQRVDPRKDVDGFHPQNVGHLALREFGLRPCTPRGIVTLLGHTDRPVRGRNATIVGVSNHVGRPMGLELLMAGCTVTSCHKFTPPQMLEAAVRQADILIVAVGRPGVIPGEWVKPGAVVIDVGINRLDDGRLVGDVGFESAVKRASWITPVPGGVGPMTVATLMQNTLEAAEAADC.

Residues 175-177 and isoleucine 243 contribute to the NADP(+) site; that span reads GVS.

This sequence belongs to the tetrahydrofolate dehydrogenase/cyclohydrolase family. In terms of assembly, homodimer.

It catalyses the reaction (6R)-5,10-methylene-5,6,7,8-tetrahydrofolate + NADP(+) = (6R)-5,10-methenyltetrahydrofolate + NADPH. The enzyme catalyses (6R)-5,10-methenyltetrahydrofolate + H2O = (6R)-10-formyltetrahydrofolate + H(+). It participates in one-carbon metabolism; tetrahydrofolate interconversion. In terms of biological role, catalyzes the oxidation of 5,10-methylenetetrahydrofolate to 5,10-methenyltetrahydrofolate and then the hydrolysis of 5,10-methenyltetrahydrofolate to 10-formyltetrahydrofolate. The polypeptide is Bifunctional protein FolD (Xylella fastidiosa (strain 9a5c)).